We begin with the raw amino-acid sequence, 360 residues long: Photosystem II protein D1 (360 aa).

3 helical membrane-spanning segments follow: residues 30-47 (YVGWFGVLMIPCLLAAAA), 119-134 (HFLIGISAYMGRQWEL), and 143-157 (WICVAYSAPVSAAFA). Residue H119 coordinates chlorophyll a. Y127 provides a ligand contact to pheophytin a. The [CaMn4O5] cluster site is built by D171 and E190. A helical membrane pass occupies residues 198–219 (FHMAGVAGMFGGSLFSAMHGSL). Residue H199 participates in chlorophyll a binding. Residues H216 and 265–266 (SF) contribute to the a quinone site. A Fe cation-binding site is contributed by H216. H273 contributes to the Fe cation binding site. Residues 275–289 (FLAVFPVVCVWLTSM) form a helical membrane-spanning segment. Residues H333, E334, D343, and A345 each contribute to the [CaMn4O5] cluster site. Positions 346–360 (AAESTTVALSAPAIG) are excised as a propeptide.

The protein belongs to the reaction center PufL/M/PsbA/D family. As to quaternary structure, PSII is composed of 1 copy each of membrane proteins PsbA, PsbB, PsbC, PsbD, PsbE, PsbF, PsbH, PsbI, PsbJ, PsbK, PsbL, PsbM, PsbT, PsbX, PsbY, Psb30/Ycf12, peripheral proteins PsbO, CyanoQ (PsbQ), PsbU, PsbV and a large number of cofactors. It forms dimeric complexes. The D1/D2 heterodimer binds P680, chlorophylls that are the primary electron donor of PSII, and subsequent electron acceptors. It shares a non-heme iron and each subunit binds pheophytin, quinone, additional chlorophylls, carotenoids and lipids. D1 provides most of the ligands for the Mn4-Ca-O5 cluster of the oxygen-evolving complex (OEC). There is also a Cl(-1) ion associated with D1 and D2, which is required for oxygen evolution. The PSII complex binds additional chlorophylls, carotenoids and specific lipids. is required as a cofactor. Post-translationally, tyr-162 forms a radical intermediate that is referred to as redox-active TyrZ, YZ or Y-Z. C-terminally processed by CtpA; processing is essential to allow assembly of the oxygen-evolving complex and thus photosynthetic growth.

It is found in the cellular thylakoid membrane. The catalysed reaction is 2 a plastoquinone + 4 hnu + 2 H2O = 2 a plastoquinol + O2. Its function is as follows. Photosystem II (PSII) is a light-driven water:plastoquinone oxidoreductase that uses light energy to abstract electrons from H(2)O, generating O(2) and a proton gradient subsequently used for ATP formation. It consists of a core antenna complex that captures photons, and an electron transfer chain that converts photonic excitation into a charge separation. The D1/D2 (PsbA/PsbD) reaction center heterodimer binds P680, the primary electron donor of PSII as well as several subsequent electron acceptors. In Prochlorococcus marinus (strain MIT 9312), this protein is Photosystem II protein D1.